The primary structure comprises 550 residues: MTKVPATKKLQSSPNSGAVRPFYASENLRQVPDKPMKSIKYMDKEIINLKKDLIRSRFLIQSVKIGRGYFAILREETAKKKKQQQLQKLKEEERNKFQPAEKISEIHYGDTLLSTYDDEKLKTLGARVTRRPFTPIHSCIISPSLTEAHVEPLFRQLCALHWLLEALTIDHTHHTMKPVITCWNPKDPGGSKSTIKKINKDKSMGQKWEHFITAPKTKKFKIPTMRVTNRKPSRRGSTLSLSRASGGSSPQSSMISVNPGSDEPPSVNTQVTSSKDIEDNESSSTKPDEEPLYMNLQKLLEMVREDARRTVTIENGMQRKAPSILSVLKQNKSNSAYKEMQTTLKSSERSSSTSAESHIQPVQKKSKNRTNCDINIHYKSGVCNTMRAKFYSVAQEAGFCLQDKMEILMKRQEERGIQKFRAFVLVSNFQKDIAKMRHHISVVKGDAEEIADHWYFDLLSKLPEDLKNFRPAKKILVKLQKFGENLDLRIRPHVLLKVLQDLRIWELCSPDIAVAIEFVREHIIHMPQEDYISWLQSRINIPIGPYSALR.

Residues 1–21 are disordered; sequence MTKVPATKKLQSSPNSGAVRP. Positions 71–98 form a coiled coil; the sequence is AILREETAKKKKQQQLQKLKEEERNKFQ. Disordered regions lie at residues 219-293 and 336-367; these read KFKI…EPLY and AYKEMQTTLKSSERSSSTSAESHIQPVQKKSK. A compositionally biased stretch (low complexity) spans 235–256; the sequence is RGSTLSLSRASGGSSPQSSMIS. The span at 336–345 shows a compositional bias: polar residues; the sequence is AYKEMQTTLK.

The sequence is that of Coiled-coil domain-containing protein 60 (CCDC60) from Homo sapiens (Human).